Consider the following 288-residue polypeptide: 2-methoxy-6-polyprenyl-1,4-benzoquinol methylase, mitochondrial (288 aa).

Residues 1-27 (MALRSVSRRLGSRILNQRSFVASLHSH) constitute a mitochondrion transit peptide. S-adenosyl-L-methionine contacts are provided by residues threonine 94, aspartate 130, and 160–161 (DA).

Belongs to the class I-like SAM-binding methyltransferase superfamily. MenG/UbiE family. In terms of assembly, component of a multi-subunit COQ enzyme complex.

It is found in the mitochondrion inner membrane. The catalysed reaction is a 2-methoxy-6-(all-trans-polyprenyl)benzene-1,4-diol + S-adenosyl-L-methionine = a 5-methoxy-2-methyl-3-(all-trans-polyprenyl)benzene-1,4-diol + S-adenosyl-L-homocysteine + H(+). It participates in cofactor biosynthesis; ubiquinone biosynthesis. In terms of biological role, methyltransferase required for the conversion of 2-polyprenyl-6-methoxy-1,4-benzoquinol (DDMQH2) to 2-polyprenyl-3-methyl-6-methoxy-1,4-benzoquinol (DMQH2). The polypeptide is 2-methoxy-6-polyprenyl-1,4-benzoquinol methylase, mitochondrial (Arabidopsis thaliana (Mouse-ear cress)).